We begin with the raw amino-acid sequence, 410 residues long: Acetate kinase (410 aa).

N7 lines the Mg(2+) pocket. An ATP-binding site is contributed by K14. R88 serves as a coordination point for substrate. The active-site Proton donor/acceptor is D145. Residues 203 to 207, 278 to 280, and 326 to 330 contribute to the ATP site; these read HAGNG, DTR, and GIGEN. Residue E379 coordinates Mg(2+).

The protein belongs to the acetokinase family. Homodimer. It depends on Mg(2+) as a cofactor. Requires Mn(2+) as cofactor.

Its subcellular location is the cytoplasm. It carries out the reaction acetate + ATP = acetyl phosphate + ADP. Its pathway is metabolic intermediate biosynthesis; acetyl-CoA biosynthesis; acetyl-CoA from acetate: step 1/2. In terms of biological role, catalyzes the formation of acetyl phosphate from acetate and ATP. Can also catalyze the reverse reaction. This chain is Acetate kinase, found in Onion yellows phytoplasma (strain OY-M).